The primary structure comprises 347 residues: NADH-ubiquinone oxidoreductase chain 2 (347 aa).

10 helical membrane passes run 3–23, 25–45, 66–86, 93–115, 149–169, 178–198, 201–221, 237–257, 274–294, and 325–345; these read PPIL…VMLS, HWLL…PILM, ASML…QWVI, IASI…HFWV, INTN…GWGG, IMAY…TYNP, MILN…LFML, FPLI…LPPL, NMII…YFYL, and LLPP…MLSV.

This sequence belongs to the complex I subunit 2 family. As to quaternary structure, core subunit of respiratory chain NADH dehydrogenase (Complex I) which is composed of 45 different subunits. Interacts with TMEM242.

It is found in the mitochondrion inner membrane. The enzyme catalyses a ubiquinone + NADH + 5 H(+)(in) = a ubiquinol + NAD(+) + 4 H(+)(out). Functionally, core subunit of the mitochondrial membrane respiratory chain NADH dehydrogenase (Complex I) which catalyzes electron transfer from NADH through the respiratory chain, using ubiquinone as an electron acceptor. Essential for the catalytic activity and assembly of complex I. This Canis lupus (Gray wolf) protein is NADH-ubiquinone oxidoreductase chain 2.